A 786-amino-acid polypeptide reads, in one-letter code: LPS-assembly protein LptD (786 aa).

The signal sequence occupies residues M1–A39.

The protein belongs to the LptD family. In terms of assembly, component of the lipopolysaccharide transport and assembly complex. Interacts with LptE and LptA.

Its subcellular location is the cell outer membrane. Its function is as follows. Together with LptE, is involved in the assembly of lipopolysaccharide (LPS) at the surface of the outer membrane. This chain is LPS-assembly protein LptD, found in Burkholderia ambifaria (strain ATCC BAA-244 / DSM 16087 / CCUG 44356 / LMG 19182 / AMMD) (Burkholderia cepacia (strain AMMD)).